Consider the following 220-residue polypeptide: Vesicle-associated membrane protein 7 (220 aa).

Topologically, residues 2–188 (AILFAVVARG…ARAMCMKNLK (187 aa)) are cytoplasmic. The Longin domain maps to 7–110 (VVARGTTILA…AMNSEFSSVL (104 aa)). The region spanning 125-185 (QVAETQAQVD…RNLARAMCMK (61 aa)) is the v-SNARE coiled-coil homology domain. The helical; Anchor for type IV membrane protein transmembrane segment at 189-209 (LTIIIIIVSIVIIYIIVSAAC) threads the bilayer. The Vesicular portion of the chain corresponds to 210–220 (GGLAWPSCVQK).

The protein belongs to the synaptobrevin family.

It localises to the cytoplasmic vesicle. Its subcellular location is the secretory vesicle membrane. The protein localises to the golgi apparatus. It is found in the trans-Golgi network membrane. The protein resides in the late endosome membrane. It localises to the lysosome membrane. Its subcellular location is the endoplasmic reticulum membrane. The protein localises to the phagosome membrane. It is found in the synapse. The protein resides in the synaptosome. Involved in the targeting and/or fusion of transport vesicles to their target membrane during transport of proteins from the early endosome to the lysosome. Required for heterotypic fusion of late endosomes with lysosomes and homotypic lysosomal fusion. Required for calcium regulated lysosomal exocytosis. Involved in the export of chylomicrons from the endoplasmic reticulum to the cis Golgi. Required for focal exocytosis of late endocytic vesicles during phagosome formation. The polypeptide is Vesicle-associated membrane protein 7 (Gallus gallus (Chicken)).